The chain runs to 231 residues: Phosphoglycolate phosphatase (231 aa).

The Nucleophile role is filled by Asp-9. Asp-9 and Asp-11 together coordinate Mg(2+). Lys-154 contacts substrate. Residues Asp-177 and Asp-181 each coordinate Mg(2+).

It belongs to the archaeal SPP-like hydrolase family. Mg(2+) is required as a cofactor.

The enzyme catalyses 2-phosphoglycolate + H2O = glycolate + phosphate. Its function is as follows. Catalyzes the dephosphorylation of 2-phosphoglycolate. This is Phosphoglycolate phosphatase from Nitrosopumilus maritimus (strain SCM1).